The sequence spans 120 residues: Large ribosomal subunit protein eL8 (120 aa).

The protein belongs to the eukaryotic ribosomal protein eL8 family. In terms of assembly, part of the 50S ribosomal subunit. Probably part of the RNase P complex.

It localises to the cytoplasm. Functionally, multifunctional RNA-binding protein that recognizes the K-turn motif in ribosomal RNA, the RNA component of RNase P, box H/ACA, box C/D and box C'/D' sRNAs. The chain is Large ribosomal subunit protein eL8 from Halobacterium salinarum (strain ATCC 29341 / DSM 671 / R1).